A 272-amino-acid chain; its full sequence is Undecaprenyl-diphosphatase (272 aa).

8 consecutive transmembrane segments (helical) span residues 1 to 21 (MSTL…FLPI), 39 to 59 (QGLA…MMYF), 91 to 111 (WWIL…KDFI), 117 to 137 (SALV…FADI), 151 to 171 (LGLK…IPGT), 196 to 216 (FLLS…KLIL), 228 to 248 (LGSL…LILL), and 251 to 271 (LGMM…LWFI).

Belongs to the UppP family.

It localises to the cell inner membrane. The catalysed reaction is di-trans,octa-cis-undecaprenyl diphosphate + H2O = di-trans,octa-cis-undecaprenyl phosphate + phosphate + H(+). Catalyzes the dephosphorylation of undecaprenyl diphosphate (UPP). Confers resistance to bacitracin. The polypeptide is Undecaprenyl-diphosphatase (Colwellia psychrerythraea (strain 34H / ATCC BAA-681) (Vibrio psychroerythus)).